Consider the following 106-residue polypeptide: UPF0091 protein RC0354 (106 aa).

It belongs to the UPF0091 family.

In Rickettsia conorii (strain ATCC VR-613 / Malish 7), this protein is UPF0091 protein RC0354.